A 687-amino-acid chain; its full sequence is Polyphosphate kinase (687 aa).

Asn45 provides a ligand contact to ATP. Arg375 and Arg405 together coordinate Mg(2+). Residue His435 is the Phosphohistidine intermediate of the active site. The ATP site is built by Tyr472, Arg568, and His596.

It belongs to the polyphosphate kinase 1 (PPK1) family. The cofactor is Mg(2+). Post-translationally, an intermediate of this reaction is the autophosphorylated ppk in which a phosphate is covalently linked to a histidine residue through a N-P bond.

It carries out the reaction [phosphate](n) + ATP = [phosphate](n+1) + ADP. Functionally, catalyzes the reversible transfer of the terminal phosphate of ATP to form a long-chain polyphosphate (polyP). The protein is Polyphosphate kinase of Burkholderia ambifaria (strain ATCC BAA-244 / DSM 16087 / CCUG 44356 / LMG 19182 / AMMD) (Burkholderia cepacia (strain AMMD)).